The primary structure comprises 538 residues: Phosphoenolpyruvate carboxykinase (ATP) (538 aa).

Substrate-binding residues include Arg64, Tyr205, and Lys211. Residues Lys211, His230, and 246-254 (GLSGTGKTT) each bind ATP. Residues Lys211 and His230 each coordinate Mn(2+). Position 267 (Asp267) interacts with Mn(2+). Residues Glu295, Arg331, 447–448 (RI), and Thr453 contribute to the ATP site. Substrate is bound at residue Arg331.

Belongs to the phosphoenolpyruvate carboxykinase (ATP) family. Monomer. Mn(2+) is required as a cofactor.

It is found in the cytoplasm. It catalyses the reaction oxaloacetate + ATP = phosphoenolpyruvate + ADP + CO2. It participates in carbohydrate biosynthesis; gluconeogenesis. Involved in the gluconeogenesis. Catalyzes the conversion of oxaloacetate (OAA) to phosphoenolpyruvate (PEP) through direct phosphoryl transfer between the nucleoside triphosphate and OAA. The chain is Phosphoenolpyruvate carboxykinase (ATP) from Haemophilus influenzae (strain ATCC 51907 / DSM 11121 / KW20 / Rd).